We begin with the raw amino-acid sequence, 180 residues long: Ribosome maturation factor RimM (180 aa).

Residues 104–177 (EGEFHLLDLV…WLLLTPPPGL (74 aa)) form the PRC barrel domain.

Belongs to the RimM family. As to quaternary structure, binds ribosomal protein uS19.

The protein localises to the cytoplasm. An accessory protein needed during the final step in the assembly of 30S ribosomal subunit, possibly for assembly of the head region. Essential for efficient processing of 16S rRNA. May be needed both before and after RbfA during the maturation of 16S rRNA. It has affinity for free ribosomal 30S subunits but not for 70S ribosomes. This Synechococcus sp. (strain CC9902) protein is Ribosome maturation factor RimM.